The chain runs to 103 residues: Large ribosomal subunit protein bL21 (103 aa).

Belongs to the bacterial ribosomal protein bL21 family. In terms of assembly, part of the 50S ribosomal subunit. Contacts protein L20.

This protein binds to 23S rRNA in the presence of protein L20. The polypeptide is Large ribosomal subunit protein bL21 (Shewanella frigidimarina (strain NCIMB 400)).